The chain runs to 403 residues: GPI-N-acetylgalactosamine transferase PGAP4 (403 aa).

The Cytoplasmic segment spans residues 1–22; that stretch reads MSTSTSPAAMLLRRLRRLSWGS. Residues 23-43 traverse the membrane as a helical segment; sequence TAVQLFILTVVTFGLLAPLAC. Residues 44 to 259 are Lumenal-facing; sequence HRLLHSYFYL…RLQHYINPEP (216 aa). N-linked (GalNAc...) asparagine glycosylation occurs at Asn-87. Val-109 provides a ligand contact to UDP-N-acetyl-alpha-D-galactosamine. 2 disulfides stabilise this stretch: Cys-132–Cys-136 and Cys-144–Cys-194. A DXD motif motif is present at residues 211-213; it reads EDD. A helical transmembrane segment spans residues 260–280; the sequence is MRILEWVGVGMLLGPLLTWIY. Residues 281-287 are Cytoplasmic-facing; it reads MRFASRP. Residues 288–308 form a helical membrane-spanning segment; it reads GFSWPVMLFFSLYSMGLVELV. At 309-403 the chain is on the lumenal side; that stretch reads GRHYFLELRR…LRYNFHPSLL (95 aa). Cysteines 332 and 333 form a disulfide. Positions 334, 335, and 362 each coordinate UDP-N-acetyl-alpha-D-galactosamine.

It belongs to the PGAP4 family. Post-translationally, glycosylated.

The protein resides in the golgi apparatus membrane. Golgi-resident glycosylphosphatidylinositol (GPI)-N-acetylgalactosamine transferase that catalyzes the N-acetyl-beta-D-galactosamine transfer from an UDP-N-acetyl-alpha-D-galactosamine to the 4-OH-position of the first mannose of the glycosylphosphatidylinositol (GPI) of a GPI-anchored protein (GPI-AP). This modification occurs after the fatty acid remodeling step of the GPI-anchor maturation. The sequence is that of GPI-N-acetylgalactosamine transferase PGAP4 from Homo sapiens (Human).